Here is a 668-residue protein sequence, read N- to C-terminus: Alpha-1,4-glucan:maltose-1-phosphate maltosyltransferase (668 aa).

Residues 263–288 are disordered; the sequence is RKGRNNSLTPAPDDPGSPYAIGSEEG. Alpha-maltose 1-phosphate-binding residues include lysine 264, glutamine 324, and aspartate 359. The active-site Nucleophile is aspartate 395. Asparagine 396 lines the alpha-maltose 1-phosphate pocket. The active-site Proton donor is glutamate 424. 535-536 lines the alpha-maltose 1-phosphate pocket; it reads KY.

This sequence belongs to the glycosyl hydrolase 13 family. GlgE subfamily. In terms of assembly, homodimer.

The catalysed reaction is alpha-maltose 1-phosphate + [(1-&gt;4)-alpha-D-glucosyl](n) = [(1-&gt;4)-alpha-D-glucosyl](n+2) + phosphate. Maltosyltransferase that uses maltose 1-phosphate (M1P) as the sugar donor to elongate linear or branched alpha-(1-&gt;4)-glucans. Is involved in a branched alpha-glucan biosynthetic pathway from trehalose, together with TreS, Mak and GlgB. In Cereibacter sphaeroides (strain ATCC 17023 / DSM 158 / JCM 6121 / CCUG 31486 / LMG 2827 / NBRC 12203 / NCIMB 8253 / ATH 2.4.1.) (Rhodobacter sphaeroides), this protein is Alpha-1,4-glucan:maltose-1-phosphate maltosyltransferase.